Here is a 270-residue protein sequence, read N- to C-terminus: UPF0354 protein BCE_4835 (270 aa).

It belongs to the UPF0354 family.

The chain is UPF0354 protein BCE_4835 from Bacillus cereus (strain ATCC 10987 / NRS 248).